The chain runs to 306 residues: tRNA pseudouridine synthase B (306 aa).

D48 acts as the Nucleophile in catalysis.

This sequence belongs to the pseudouridine synthase TruB family. Type 1 subfamily.

The enzyme catalyses uridine(55) in tRNA = pseudouridine(55) in tRNA. Its function is as follows. Responsible for synthesis of pseudouridine from uracil-55 in the psi GC loop of transfer RNAs. This Ectopseudomonas mendocina (strain ymp) (Pseudomonas mendocina) protein is tRNA pseudouridine synthase B.